The chain runs to 248 residues: UPF0328 protein ECU06_0030/ECU06_1690/ECU11_0020 (248 aa).

Disordered stretches follow at residues 1 to 34 and 51 to 81; these read MVRH…HPSR and ASAE…ILPD. 2 stretches are compositionally biased toward polar residues: residues 10-19 and 61-76; these read PKTTNPNPES and QNLS…THQS.

The protein belongs to the UPF0328 family.

This is UPF0328 protein ECU06_0030/ECU06_1690/ECU11_0020 from Encephalitozoon cuniculi (strain GB-M1) (Microsporidian parasite).